Consider the following 1022-residue polypeptide: Antigenic heat-stable 120 kDa protein (1022 aa).

Disordered stretches follow at residues 1–41 and 355–403; these read MSKD…QTTT and GQSK…PQSQ. Residues 19–34 are compositionally biased toward basic and acidic residues; sequence EYTEEQKQTLEQEQKE. 2 stretches are compositionally biased toward polar residues: residues 355–380 and 387–403; these read GQSK…QYKQ and PTNQ…PQSQ.

It localises to the cytoplasm. This chain is Antigenic heat-stable 120 kDa protein (sca4), found in Rickettsia conorii (strain ATCC VR-613 / Malish 7).